A 229-amino-acid chain; its full sequence is Large ribosomal subunit protein uL1 (229 aa).

Belongs to the universal ribosomal protein uL1 family. Part of the 50S ribosomal subunit.

In terms of biological role, binds directly to 23S rRNA. The L1 stalk is quite mobile in the ribosome, and is involved in E site tRNA release. Functionally, protein L1 is also a translational repressor protein, it controls the translation of the L11 operon by binding to its mRNA. This is Large ribosomal subunit protein uL1 from Streptococcus equi subsp. equi (strain 4047).